The following is a 374-amino-acid chain: F(420)H(2) dehydrogenase subunit D (374 aa).

This sequence belongs to the complex I 49 kDa subunit family. In terms of assembly, the FPO complex is composed of at least 13 different subunits.

It is found in the cell inner membrane. It carries out the reaction methanophenazine + reduced coenzyme F420-(gamma-L-Glu)(n) = dihydromethanophenazine + oxidized coenzyme F420-(gamma-L-Glu)(n) + H(+). Its function is as follows. Component of the F(420)H(2) dehydrogenase (FPO complex) which is part of the energy-conserving F(420)H(2):heterodisulfide oxidoreductase system. The membrane-bound electron transfer system of the complex plays an important role in the metabolism of methylotrophic methanogens when the organisms grow on methanol or methylamines. Catalyzes the oxidation of methanophenazine to dihydromethanophenazine. It shuttles electrons from F(420)H(2), via FAD and iron-sulfur (Fe-S) centers, to methanophenazine (an electron carrier in the membrane). It couples the redox reaction to proton translocation (for every two electrons transferred, two hydrogen ions are translocated across the cytoplasmic membrane), and thus conserves the redox energy in a proton gradient. It also catalyzes the oxidation of F(420)H(2) with quinones such as 2,3-dimethyl-1,4-naphthoquinone, 2-methyl-1,4-naphthoquinone and tetramethyl-p-benzoquinone. The protein is F(420)H(2) dehydrogenase subunit D (fpoD) of Methanosarcina mazei (strain ATCC BAA-159 / DSM 3647 / Goe1 / Go1 / JCM 11833 / OCM 88) (Methanosarcina frisia).